A 260-amino-acid polypeptide reads, in one-letter code: O-antigen export system permease protein RfbA (260 aa).

Transmembrane regions (helical) follow at residues 31–51 (FLGF…YVLL), 63–83 (FPFF…SVGG), 109–129 (VVVT…VLGM), 139–159 (VVLF…LTYI), 173–193 (IVSN…PLST), 201–221 (SLML…AIFY), and 229–249 (EPLM…SSIF). Positions 32–252 (LGFLWTFLNP…WAASSIFESR (221 aa)) constitute an ABC transmembrane type-2 domain.

This sequence belongs to the ABC-2 integral membrane protein family.

The protein localises to the cell inner membrane. Functionally, may form an ATP-driven O-antigen export apparatus, in association with RfbB. The protein is O-antigen export system permease protein RfbA (rfbA) of Myxococcus xanthus.